Here is a 115-residue protein sequence, read N- to C-terminus: Small ribosomal subunit protein uS13 (115 aa).

The interval R92–K115 is disordered. A compositionally biased stretch (basic residues) spans A106–K115.

This sequence belongs to the universal ribosomal protein uS13 family. Part of the 30S ribosomal subunit. Forms a loose heterodimer with protein S19. Forms two bridges to the 50S subunit in the 70S ribosome.

Functionally, located at the top of the head of the 30S subunit, it contacts several helices of the 16S rRNA. In the 70S ribosome it contacts the 23S rRNA (bridge B1a) and protein L5 of the 50S subunit (bridge B1b), connecting the 2 subunits; these bridges are implicated in subunit movement. Contacts the tRNAs in the A and P-sites. The sequence is that of Small ribosomal subunit protein uS13 from Lactobacillus gasseri (strain ATCC 33323 / DSM 20243 / BCRC 14619 / CIP 102991 / JCM 1131 / KCTC 3163 / NCIMB 11718 / NCTC 13722 / AM63).